The chain runs to 388 residues: Large ribosomal subunit protein uL3A (388 aa).

The segment covering 1–10 (MSHCKFEQPR) has biased composition (basic and acidic residues). Residues 1-34 (MSHCKFEQPRHGSLGFLPRKRASRQRGKVKAFPK) are disordered. Ser13 is modified (phosphoserine). Basic residues predominate over residues 18-31 (PRKRASRQRGKVKA). A phosphoserine mark is found at Ser65, Ser140, Ser143, Ser207, Ser295, and Ser355. Phosphothreonine is present on Thr372.

This sequence belongs to the universal ribosomal protein uL3 family. Component of the large ribosomal subunit (LSU). Mature yeast ribosomes consist of a small (40S) and a large (60S) subunit. The 40S small subunit contains 1 molecule of ribosomal RNA (18S rRNA) and at least 33 different proteins. The large 60S subunit contains 3 rRNA molecules (25S, 5.8S and 5S rRNA) and at least 46 different proteins. uL3 forms together with ES39L one of the contact sites for the signal recognition particle that targets ribosomes to the endoplasmic reticulum membrane.

The protein localises to the cytoplasm. In terms of biological role, component of the ribosome, a large ribonucleoprotein complex responsible for the synthesis of proteins in the cell. The small ribosomal subunit (SSU) binds messenger RNAs (mRNAs) and translates the encoded message by selecting cognate aminoacyl-transfer RNA (tRNA) molecules. The large subunit (LSU) contains the ribosomal catalytic site termed the peptidyl transferase center (PTC), which catalyzes the formation of peptide bonds, thereby polymerizing the amino acids delivered by tRNAs into a polypeptide chain. The nascent polypeptides leave the ribosome through a tunnel in the LSU and interact with protein factors that function in enzymatic processing, targeting, and the membrane insertion of nascent chains at the exit of the ribosomal tunnel. uL3 plays a role in coordinating processes of accommodating the aminoacyl-tRNA in the PTC. In Schizosaccharomyces pombe (strain 972 / ATCC 24843) (Fission yeast), this protein is Large ribosomal subunit protein uL3A (rpl301).